We begin with the raw amino-acid sequence, 189 residues long: UPF0301 protein PLES_04031 (189 aa).

This sequence belongs to the UPF0301 (AlgH) family.

This Pseudomonas aeruginosa (strain LESB58) protein is UPF0301 protein PLES_04031.